Here is a 370-residue protein sequence, read N- to C-terminus: Platelet-derived growth factor D (370 aa).

The signal sequence occupies residues methionine 1–alanine 23. The region spanning arginine 52 to valine 170 is the CUB domain. A disulfide bridge links cysteine 109 with cysteine 131. An N-linked (GlcNAc...) asparagine glycan is attached at asparagine 276. 2 disulfides stabilise this stretch: cysteine 302–cysteine 360 and cysteine 306–cysteine 362.

This sequence belongs to the PDGF/VEGF growth factor family. In terms of assembly, homodimer; disulfide-linked. Interacts with PDGFRB homodimers, and with heterodimers formed by PDGFRA and PDGFRB. Post-translationally, activated by proteolytic cleavage. Proteolytic removal of the N-terminal CUB domain releasing the core domain is necessary for unmasking the receptor-binding epitopes of the core domain. Cleavage after Arg-247 or Arg-249 by urokinase plasminogen activator gives rise to the active form. In terms of tissue distribution, widely expressed. Expressed at high levels in the kidney, adrenal glands, eye and CNS. In the kidney the localization is confined to arterial and arteriolar vascular smooth muscle cells and is also detected at low levels in the glomeruli In the eye in the anterior segment it is localized to the iris and ciliary body. In the retina localizes intensely to the outer plexiform layer, which contains photoreceptor axons and the synaptic layer between photoreceptors and second order neurons. In the spinal cord, prominently expressed in the motorneurons.

The protein resides in the secreted. Functionally, growth factor that plays an essential role in the regulation of embryonic development, cell proliferation, cell migration, survival and chemotaxis. Potent mitogen for cells of mesenchymal origin. Plays an important role in wound healing. Induces macrophage recruitment, increased interstitial pressure, and blood vessel maturation during angiogenesis. May play an important role in control of lens epithelial cell proliferation. Can initiate events that lead to a mesangial proliferative glomerulonephritis, including influx of monocytes and macrophages and production of extracellular matrix. The chain is Platelet-derived growth factor D (Pdgfd) from Rattus norvegicus (Rat).